The primary structure comprises 165 residues: MASGVQVADEVCRIFYDMKVRKCSTPEEIKKRKKAVIFCLSADKKCIVVEEGKEILVGDVGVTITDPFKHFVGMLPEKDCRYALYDASFETKESRKEELMFFLWAPEQAPLKSKMIYASSKDAIKKKFPGIKHEYQANGPEDLNRTSIAEKLGGSLIVAFEGSPV.

A2 carries the N-acetylalanine modification. S3 bears the Phosphoserine mark. Positions 4–153 constitute an ADF-H domain; it reads GVQVADEVCR…NRTSIAEKLG (150 aa). Position 19 is an N6-acetyllysine (K19). The Nuclear localization signal motif lies at 30 to 34; the sequence is KKRKK.

The protein belongs to the actin-binding proteins ADF family. ISGylated.

Actin-depolymerizing protein. Severs actin filaments (F-actin) and binds to actin monomers (G-actin). Acts in a pH-independent manner. The polypeptide is Destrin (Dstn) (Rattus norvegicus (Rat)).